Reading from the N-terminus, the 362-residue chain is tRNA/tmRNA (uracil-C(5))-methyltransferase (362 aa).

The S-adenosyl-L-methionine site is built by glutamine 182, tyrosine 210, asparagine 215, glutamate 231, and aspartate 293. Residue cysteine 318 is the Nucleophile of the active site. The active-site Proton acceptor is glutamate 352.

This sequence belongs to the class I-like SAM-binding methyltransferase superfamily. RNA M5U methyltransferase family. TrmA subfamily.

It catalyses the reaction uridine(54) in tRNA + S-adenosyl-L-methionine = 5-methyluridine(54) in tRNA + S-adenosyl-L-homocysteine + H(+). It carries out the reaction uridine(341) in tmRNA + S-adenosyl-L-methionine = 5-methyluridine(341) in tmRNA + S-adenosyl-L-homocysteine + H(+). Dual-specificity methyltransferase that catalyzes the formation of 5-methyluridine at position 54 (m5U54) in all tRNAs, and that of position 341 (m5U341) in tmRNA (transfer-mRNA). The polypeptide is tRNA/tmRNA (uracil-C(5))-methyltransferase (Neisseria meningitidis serogroup A / serotype 4A (strain DSM 15465 / Z2491)).